The sequence spans 494 residues: Cytochrome c-552 (494 aa).

Residues 1–31 (MEKKLKSWQGWLLFGGTMVVVFVLGMIAASV) form the signal peptide. H116 is a heme c binding site. 3 residues coordinate heme: C144, C147, and K148. Heme c is bound by residues C182, C185, H186, C224, C227, and H228. Residues E230, Y231, K276, and Q278 each coordinate Ca(2+). Y231 provides a ligand contact to substrate. Residue H279 coordinates substrate. H290, C297, C300, H301, H315, C328, C331, H332, and H407 together coordinate heme c.

This sequence belongs to the cytochrome c-552 family. It depends on Ca(2+) as a cofactor. Requires heme c as cofactor.

It is found in the periplasm. It carries out the reaction 6 Fe(III)-[cytochrome c] + NH4(+) + 2 H2O = 6 Fe(II)-[cytochrome c] + nitrite + 8 H(+). Its pathway is nitrogen metabolism; nitrate reduction (assimilation). Catalyzes the reduction of nitrite to ammonia, consuming six electrons in the process. This chain is Cytochrome c-552, found in Parabacteroides distasonis (strain ATCC 8503 / DSM 20701 / CIP 104284 / JCM 5825 / NCTC 11152).